A 328-amino-acid polypeptide reads, in one-letter code: Cytochrome c biogenesis protein CcsA (328 aa).

8 helical membrane passes run I13–L33, G46–G66, L73–F93, L101–L121, M146–I166, I234–N254, W263–I283, and A295–L315.

This sequence belongs to the CcmF/CycK/Ccl1/NrfE/CcsA family. As to quaternary structure, may interact with Ccs1.

The protein localises to the plastid. It localises to the chloroplast thylakoid membrane. Required during biogenesis of c-type cytochromes (cytochrome c6 and cytochrome f) at the step of heme attachment. This Crucihimalaya wallichii (Rock-cress) protein is Cytochrome c biogenesis protein CcsA.